The sequence spans 414 residues: tRNA N6-adenosine threonylcarbamoyltransferase, mitochondrial (414 aa).

The transit peptide at 1 to 29 directs the protein to the mitochondrion; that stretch reads MLMLSKTAGAIPRPPRSNVRGFIRRFNVQ. Lysine 74 and lysine 140 each carry N6-acetyllysine. A divalent metal cation-binding residues include histidine 147 and histidine 151. Residues 169 to 173 and aspartate 202 contribute to the substrate site; that span reads LISGG. N6-acetyllysine is present on lysine 203. 2 residues coordinate substrate: glycine 222 and glutamate 226. N6-acetyllysine is present on residues lysine 230 and lysine 299. Residues 329 to 330 and threonine 357 contribute to the substrate site; that span reads SN. Aspartate 358 provides a ligand contact to a divalent metal cation.

The protein belongs to the KAE1 / TsaD family. Monomer. A divalent metal cation serves as cofactor.

Its subcellular location is the mitochondrion. The catalysed reaction is L-threonylcarbamoyladenylate + adenosine(37) in tRNA = N(6)-L-threonylcarbamoyladenosine(37) in tRNA + AMP + H(+). In terms of biological role, required for the formation of a threonylcarbamoyl group on adenosine at position 37 (t(6)A37) in mitochondrial tRNAs that read codons beginning with adenine. Probably involved in the transfer of the threonylcarbamoyl moiety of threonylcarbamoyl-AMP (TC-AMP) to the N6 group of A37. Involved in mitochondrial genome maintenance. This Rattus norvegicus (Rat) protein is tRNA N6-adenosine threonylcarbamoyltransferase, mitochondrial.